Reading from the N-terminus, the 182-residue chain is MRPPEIPEGHADTSGQFLVAHPKMPANIFAHSVIYVVSHNADGAMGLIVNRLAGAGPLGKLLEAFGLASKAQREIKLYLGGPVGIGQGFVLHSDDYAGASTRALKKGLSLSTGLDVLEAIARGRGPRQVRMLFGYAGWSPGQLDGEIARGDWLLAPADTSLIFSEEPDKVWEEALKHAGLPL.

This sequence belongs to the UPF0301 (AlgH) family.

This is UPF0301 protein MCA0413 1 from Methylococcus capsulatus (strain ATCC 33009 / NCIMB 11132 / Bath).